Reading from the N-terminus, the 483-residue chain is MAADEVAGGARKATKSKLFEFLVHGVRPGMPSGARMPHQGAPMGPPGSPYMGSPAVRPGLAPAGMEPARKRAAPPPGQSQAQSQGQPVPTAPARSRSAKRRKMADKILPQRIRELVPESQAYMDLLAFERKLDQTIMRKRVDIQEALKRPMKQKRKLRLYISNTFNPAKPDAEDSDGSIASWELRVEGKLLDDPSKQKRKFSSFFKSLVIELDKDLYGPDNHLVEWHRTPTTQETDGFQVKRPGDLSVRCTLLLMLDYQPPQFKLDPRLARLLGLHTQSRSAIVQALWQYVKTNRLQDSHDKEYINGDKYFQQIFDCPRLKFSEIPQRLTALLLPPDPIVINHVISVDPSDQKKTACYDIDVEVEEPLKGQMSSFLLSTANQQEISALDSKIHETIESINQLKIQRDFMLSFSRDPKGYVQDLLRSQSRDLKVMTDVAGNPEEERRAEFYHQPWSQEAVSRYFYCKIQQRRQELEQSLVVRNT.

At A2 the chain carries N-acetylalanine. Residues V26–K102 are disordered. Residues Q78–P87 show a composition bias toward low complexity. S178 carries the post-translational modification Phosphoserine. An SWIB/MDM2 domain is found at Y258–P335.

The protein belongs to the SMARCD family. Component of the multiprotein chromatin-remodeling complexes SWI/SNF: SWI/SNF-A (BAF), SWI/SNF-B (PBAF) and related complexes. The canonical complex contains a catalytic subunit (either SMARCA4/BRG1/BAF190A or SMARCA2/BRM/BAF190B) and at least SMARCE1, ACTL6A/BAF53, SMARCC1/BAF155, SMARCC2/BAF170, and SMARCB1/SNF5/BAF47. Other subunits specific to each of the complexes may also be present permitting several possible combinations developmentally and tissue specific. Component of the BAF complex, which includes at least actin (ACTB), ARID1A/BAF250A, ARID1B/BAF250B, SMARCA2/BRM, SMARCA4/BRG1/BAF190A, ACTL6A/BAF53, ACTL6B/BAF53B, SMARCE1/BAF57, SMARCC1/BAF155, SMARCC2/BAF170, SMARCB1/SNF5/INI1, and one or more SMARCD1/BAF60A, SMARCD2/BAF60B, or SMARCD3/BAF60C. In muscle cells, the BAF complex also contains DPF3. Component of neural progenitors-specific chromatin remodeling complex (npBAF complex) composed of at least, ARID1A/BAF250A or ARID1B/BAF250B, SMARCD1/BAF60A, SMARCD3/BAF60C, SMARCA2/BRM/BAF190B, SMARCA4/BRG1/BAF190A, SMARCB1/BAF47, SMARCC1/BAF155, SMARCE1/BAF57, SMARCC2/BAF170, PHF10/BAF45A, ACTL6A/BAF53A and actin. Component of neuron-specific chromatin remodeling complex (nBAF complex) composed of at least, ARID1A/BAF250A or ARID1B/BAF250B, SMARCD1/BAF60A, SMARCD3/BAF60C, SMARCA2/BRM/BAF190B, SMARCA4/BRG1/BAF190A, SMARCB1/BAF47, SMARCC1/BAF155, SMARCE1/BAF57, SMARCC2/BAF170, DPF1/BAF45B, DPF3/BAF45C, ACTL6B/BAF53B and actin. May be a component of the SWI/SNF-B (PBAF) chromatin remodeling complex, at least composed of SMARCA4/BRG1, SMARCB1/BAF47/SNF5, ACTL6A/BAF53A or ACTL6B/BAF53B, SMARCE1/BAF57, SMARCD1/BAF60A, SMARCD2/BAF60B, perhaps SMARCD3/BAF60C, SMARCC1/BAF155, SMARCC2/BAF170, PBRM1/BAF180, ARID2/BAF200 and actin. Interacts with SMARCA4/BRG1/BAF190A. Component of SWI/SNF (GBAF) subcomplex, which includes at least BICRA or BICRAL (mutually exclusive), BRD9, SS18, SMARCA2/BRM, SMARCA4/BRG1/BAF190A, ACTL6A/BAF53, SMARCC1/BAF155, and SMARCD1/BAF60A. The precise distribution of the related SMARCD1, SMARCD2 and SMARCD3 proteins among these and other SWI/SNF nucleosome-remodeling complexes is not fully known. May allow recruitment of SWI/SNF containing complexes specifically to promoters where these factors are located. Also interacts with several nuclear receptors including PPARG/NR1C3, RXRA/NR1F1, ESR1, NR5A1, NR5A2/LRH1 and other transcriptional activators including the HLH protein SREBF1/SREBP1 and the homeobox protein PBX1. Interacts with PRDM1/BLIMP1. Isoform 2 and isoform 1 are expressed in brain, heart, kidney, placenta, prostate, salivary gland, spleen, testis, thyroid, trachea and uterus. Isoform 1 is also expressed in skeletal muscle and adipose tissue.

It localises to the nucleus. In terms of biological role, involved in transcriptional activation and repression of select genes by chromatin remodeling (alteration of DNA-nucleosome topology). Component of SWI/SNF chromatin remodeling complexes that carry out key enzymatic activities, changing chromatin structure by altering DNA-histone contacts within a nucleosome in an ATP-dependent manner. Stimulates nuclear receptor mediated transcription. Belongs to the neural progenitors-specific chromatin remodeling complex (npBAF complex) and the neuron-specific chromatin remodeling complex (nBAF complex). During neural development a switch from a stem/progenitor to a postmitotic chromatin remodeling mechanism occurs as neurons exit the cell cycle and become committed to their adult state. The transition from proliferating neural stem/progenitor cells to postmitotic neurons requires a switch in subunit composition of the npBAF and nBAF complexes. As neural progenitors exit mitosis and differentiate into neurons, npBAF complexes which contain ACTL6A/BAF53A and PHF10/BAF45A, are exchanged for homologous alternative ACTL6B/BAF53B and DPF1/BAF45B or DPF3/BAF45C subunits in neuron-specific complexes (nBAF). The npBAF complex is essential for the self-renewal/proliferative capacity of the multipotent neural stem cells. The nBAF complex along with CREST plays a role regulating the activity of genes essential for dendrite growth. The sequence is that of SWI/SNF-related matrix-associated actin-dependent regulator of chromatin subfamily D member 3 (SMARCD3) from Homo sapiens (Human).